The chain runs to 409 residues: Probable ferredoxin reductase CtmF (409 aa).

FAD contacts are provided by A15, D37, K50, V83, D279, and V298.

The protein belongs to the FAD-dependent oxidoreductase family. It depends on FAD as a cofactor.

It functions in the pathway terpene metabolism; monoterpene degradation. In terms of biological role, involved in the degradation of the cyclic monoterpene limonene. Probably part of an electron transfer system involved in the oxidation of limonene to perillyl alcohol. The chain is Probable ferredoxin reductase CtmF from Castellaniella defragrans (strain DSM 12143 / CCUG 39792 / 65Phen) (Alcaligenes defragrans).